Consider the following 763-residue polypeptide: Ethylene receptor 2 (763 aa).

Helical transmembrane passes span 58-78 (FLIAMAYFSIPLELLYFATCS), 86-106 (IVLQFGAFIVLCGLTHLITMF), and 115-135 (VVLALTVAKFLTALVSFATAI). 2 residues coordinate Cu cation: C97 and H101. Residues 190–339 (DRHTILYTTM…VVADQVAVAL (150 aa)) form the GAF domain. The region spanning 382–615 (AMYDGMRRPM…TIMLALQFQL (234 aa)) is the Histidine kinase domain. One can recognise a Response regulatory domain in the interval 641–760 (QVILVDSDDT…ALGDELYRVL (120 aa)). Residue D692 is modified to 4-aspartylphosphate.

Belongs to the ethylene receptor family. It depends on Cu cation as a cofactor. Autophosphorylated on serine, threonine and tyrosine residues.

The protein localises to the endoplasmic reticulum membrane. The catalysed reaction is ATP + protein L-histidine = ADP + protein N-phospho-L-histidine.. Ethylene receptor related to bacterial two-component regulators. Acts as a negative regulator of ethylene signaling. May delay the transition from the vegetative stage to the floral stage by up-regulating GI (GIGANTEA) and RCN1 and cause starch accumulation in stems by down-regulating the alpha-amylase AMY3D. This is Ethylene receptor 2 from Oryza sativa subsp. japonica (Rice).